The primary structure comprises 589 residues: Proton pump-interactor 2 (589 aa).

The stretch at 205–245 (EDSLAEKEASINRVKSMAVELNEVKKELDAITWKINHLSDK) forms a coiled coil. Basic and acidic residues-rich tracts occupy residues 370 to 383 (KGGE…REDS), 395 to 408 (TDKR…KAMD), 426 to 450 (VYEK…REEQ), and 504 to 534 (ESDH…KERS). 2 disordered regions span residues 370 to 450 (KGGE…REEQ) and 485 to 534 (KECE…KERS). Residues 431–500 (KKEEEEVDEE…AKKKAAANSS (70 aa)) adopt a coiled-coil conformation. The helical transmembrane segment at 568–588 (WVWGLSSAALAVALFLVVLLL) threads the bilayer.

Belongs to the plant Proton pump-interactor protein family. As to expression, expressed in seedlings and flowers.

It localises to the cell membrane. Its subcellular location is the endoplasmic reticulum membrane. Its function is as follows. May regulate plasma membrane ATPase activity. This Arabidopsis thaliana (Mouse-ear cress) protein is Proton pump-interactor 2 (PPI2).